We begin with the raw amino-acid sequence, 404 residues long: MVFFMLIIDVNHGALTLAEEYLNLGYEVDVWDIYQKIKKSEDFKVKYQKLKEKFGNKLNLFFEQPNFEKYDRVIAPIHCPIDVDFIPFTDAVSKILKEKFGNIHKKIINVTGVKGKTTTTSLINHILKDKYSTYLHNSNFGSIAPPTILKVLNSLDIDKYDFFIFETSLGLIKCKYGAITNVLENYKIAGGRKDALTAKFSSLKNAELSFINKRDINRYDLNINHKCLNVVDVDRAKILDKYPLKFKYFDEIFEFSKNIFGLHFVENSLFAIEICKNLVDMEEIRYRLKTFTIKNRMEIKEINKKILVKNINPGLDVKAISYAIKDFLEVFGGDIYIGGDFGIVCEEIDVKKLSEVLKRFNCRYIFVGEIGKELLNYLNGGYIKSYDENKIKRDSLVILREKIK.

Residue 112–117 (GVKGKT) participates in ATP binding.

The protein belongs to the MurCDEF family.

The enzyme catalyses 15,17(3)-seco-F430-17(3)-acid + ATP = coenzyme F430 + ADP + phosphate. Functionally, involved in the biosynthesis of the unique nickel-containing tetrapyrrole coenzyme F430, the prosthetic group of methyl-coenzyme M reductase (MCR), which plays a key role in methanogenesis and anaerobic methane oxidation. Catalyzes the activation the g-propionate side chain of 15,17(3)-seco-F430-17(3)-acid (seco-F430) for intramolecular C-C bond formation to yield the carbocyclic F ring of coenzyme F430. In Methanocaldococcus jannaschii (strain ATCC 43067 / DSM 2661 / JAL-1 / JCM 10045 / NBRC 100440) (Methanococcus jannaschii), this protein is Coenzyme F(430) synthetase.